Consider the following 240-residue polypeptide: PF03932 family protein CutC (240 aa).

This sequence belongs to the CutC family.

It localises to the cytoplasm. The chain is PF03932 family protein CutC from Xanthomonas campestris pv. campestris (strain B100).